Reading from the N-terminus, the 242-residue chain is MHVLIVDDEPLAREELSYLVSQHPQVTSVAEADSVAEAMEEMMDQKPDLLFLDIHLTDESGFDLAEKLTHLKKAPYLVFATAYDQYALKAFQVNAKDYILKPFEEEKITQVIEKASKEMGQAVPENTAEKGPKSEAIPIQGEDRIYLVAPEDIYLVSVEERQLSIFVDQQVYKMTGTLNSIEQKLPATLFIKTHRSFILNRTKIQEIQPWFNNTLQVILTNGSKVPVSRSYVKEFKEKLGLS.

The Response regulatory domain maps to 2–116 (HVLIVDDEPL…KITQVIEKAS (115 aa)). The region spanning 137 to 241 (IPIQGEDRIY…VKEFKEKLGL (105 aa)) is the HTH LytTR-type domain.

Post-translationally, phosphorylated by LytS.

Its subcellular location is the cytoplasm. Its function is as follows. Member of the two-component regulatory system LytS/LytT that probably regulates genes involved in cell wall metabolism. This is Sensory transduction protein LytT (lytT) from Enterococcus faecalis (strain ATCC 700802 / V583).